A 332-amino-acid polypeptide reads, in one-letter code: MKTLGEFIVEKQHEFSHATGELTALLSAIKLGAKIIHRDINKAGLVDILGASGAENVQGEVQQKLDLFANEKLKAALKARDIVAGIASEEEDEIVVFEGCEHAKYVVLMDPLDGSSNIDVNVSVGTIFSIYRRVTPVGTPVTEEDFLQPGNKQVAAGYVVYGSSTMLVYTTGCGVHAFTYDPSLGVFCLCQERMRFPEKGKTYSINEGNYIKFPNGVKKYIKFCQEEDKSTNRPYTSRYIGSLVADFHRNLLKGGIYLYPSTASHPDGKLRLLYECNPMAFLAEQAGGKASDGKERILDIIPETLHQRRSFFVGNDHMVEDVERFIREFPDA.

Mg(2+) is bound by residues Glu-89, Asp-110, Leu-112, and Asp-113. Substrate is bound by residues 113–116, Asn-206, Tyr-239, 257–259, and Lys-269; these read DGSS and YLY. Glu-275 provides a ligand contact to Mg(2+).

It belongs to the FBPase class 1 family. Homotetramer. Requires Mg(2+) as cofactor.

The protein resides in the cytoplasm. It carries out the reaction beta-D-fructose 1,6-bisphosphate + H2O = beta-D-fructose 6-phosphate + phosphate. It functions in the pathway carbohydrate biosynthesis; gluconeogenesis. The polypeptide is Fructose-1,6-bisphosphatase class 1 (Escherichia coli (strain ATCC 8739 / DSM 1576 / NBRC 3972 / NCIMB 8545 / WDCM 00012 / Crooks)).